The primary structure comprises 422 residues: UDP-N-acetylglucosamine 1-carboxyvinyltransferase (422 aa).

22-23 (KN) is a phosphoenolpyruvate binding site. Residue Arg-93 participates in UDP-N-acetyl-alpha-D-glucosamine binding. The active-site Proton donor is Cys-117. Residue Cys-117 is modified to 2-(S-cysteinyl)pyruvic acid O-phosphothioketal. Residues 122–126 (RPVDQ), Asp-305, and Ile-327 each bind UDP-N-acetyl-alpha-D-glucosamine.

This sequence belongs to the EPSP synthase family. MurA subfamily.

The protein localises to the cytoplasm. It catalyses the reaction phosphoenolpyruvate + UDP-N-acetyl-alpha-D-glucosamine = UDP-N-acetyl-3-O-(1-carboxyvinyl)-alpha-D-glucosamine + phosphate. It participates in cell wall biogenesis; peptidoglycan biosynthesis. Cell wall formation. Adds enolpyruvyl to UDP-N-acetylglucosamine. This chain is UDP-N-acetylglucosamine 1-carboxyvinyltransferase, found in Bordetella bronchiseptica (strain ATCC BAA-588 / NCTC 13252 / RB50) (Alcaligenes bronchisepticus).